The primary structure comprises 129 residues: DNA-directed RNA polymerase subunit omega (129 aa).

The interval 76–100 (EVDEPEPEAVPMIASGDSSGGEDSD) is disordered.

Belongs to the RNA polymerase subunit omega family. In terms of assembly, the RNAP catalytic core consists of 2 alpha, 1 beta, 1 beta' and 1 omega subunit. When a sigma factor is associated with the core the holoenzyme is formed, which can initiate transcription.

It catalyses the reaction RNA(n) + a ribonucleoside 5'-triphosphate = RNA(n+1) + diphosphate. In terms of biological role, promotes RNA polymerase assembly. Latches the N- and C-terminal regions of the beta' subunit thereby facilitating its interaction with the beta and alpha subunits. The polypeptide is DNA-directed RNA polymerase subunit omega (Xanthobacter autotrophicus (strain ATCC BAA-1158 / Py2)).